We begin with the raw amino-acid sequence, 457 residues long: NADH-ubiquinone oxidoreductase chain 4 (457 aa).

12 consecutive transmembrane segments (helical) span residues N22 to I42, S59 to S79, I95 to I115, L116 to G136, F148 to F168, L191 to F211, P223 to M243, S257 to I277, L282 to F302, I309 to L329, L350 to P370, and L433 to I453.

Belongs to the complex I subunit 4 family.

It is found in the mitochondrion membrane. It catalyses the reaction a ubiquinone + NADH + 5 H(+)(in) = a ubiquinol + NAD(+) + 4 H(+)(out). Core subunit of the mitochondrial membrane respiratory chain NADH dehydrogenase (Complex I) that is believed to belong to the minimal assembly required for catalysis. Complex I functions in the transfer of electrons from NADH to the respiratory chain. The immediate electron acceptor for the enzyme is believed to be ubiquinone. This chain is NADH-ubiquinone oxidoreductase chain 4 (ND4), found in Arbacia lixula (Black urchin).